The chain runs to 356 residues: 3-dehydroquinate synthase (356 aa).

NAD(+)-binding positions include 106–110, 130–131, K143, and K152; these read GVVGD and TT. E185, H248, and H265 together coordinate Zn(2+).

This sequence belongs to the sugar phosphate cyclases superfamily. Dehydroquinate synthase family. Co(2+) is required as a cofactor. It depends on Zn(2+) as a cofactor. NAD(+) serves as cofactor.

Its subcellular location is the cytoplasm. The enzyme catalyses 7-phospho-2-dehydro-3-deoxy-D-arabino-heptonate = 3-dehydroquinate + phosphate. Its pathway is metabolic intermediate biosynthesis; chorismate biosynthesis; chorismate from D-erythrose 4-phosphate and phosphoenolpyruvate: step 2/7. In terms of biological role, catalyzes the conversion of 3-deoxy-D-arabino-heptulosonate 7-phosphate (DAHP) to dehydroquinate (DHQ). This is 3-dehydroquinate synthase from Thermoanaerobacter pseudethanolicus (strain ATCC 33223 / 39E) (Clostridium thermohydrosulfuricum).